We begin with the raw amino-acid sequence, 509 residues long: Cobyric acid synthase (509 aa).

One can recognise a GATase cobBQ-type domain in the interval 262–459 (EIKVGIIKLP…IHGIFENDNW (198 aa)). Cysteine 343 acts as the Nucleophile in catalysis. Residue histidine 451 is part of the active site.

Belongs to the CobB/CobQ family. CobQ subfamily.

It functions in the pathway cofactor biosynthesis; adenosylcobalamin biosynthesis. In terms of biological role, catalyzes amidations at positions B, D, E, and G on adenosylcobyrinic A,C-diamide. NH(2) groups are provided by glutamine, and one molecule of ATP is hydrogenolyzed for each amidation. The polypeptide is Cobyric acid synthase (Prochlorococcus marinus (strain AS9601)).